The sequence spans 559 residues: Dihydroxy-acid dehydratase (559 aa).

Cys56 serves as a coordination point for [2Fe-2S] cluster. Asp88 serves as a coordination point for Mg(2+). Cys129 contacts [2Fe-2S] cluster. The Mg(2+) site is built by Asp130 and Lys131. Lys131 bears the N6-carboxylysine mark. Residue Cys198 coordinates [2Fe-2S] cluster. Residue Glu449 participates in Mg(2+) binding. Residue Ser475 is the Proton acceptor of the active site.

The protein belongs to the IlvD/Edd family. As to quaternary structure, homodimer. It depends on [2Fe-2S] cluster as a cofactor. Requires Mg(2+) as cofactor.

It carries out the reaction (2R)-2,3-dihydroxy-3-methylbutanoate = 3-methyl-2-oxobutanoate + H2O. It catalyses the reaction (2R,3R)-2,3-dihydroxy-3-methylpentanoate = (S)-3-methyl-2-oxopentanoate + H2O. Its pathway is amino-acid biosynthesis; L-isoleucine biosynthesis; L-isoleucine from 2-oxobutanoate: step 3/4. It participates in amino-acid biosynthesis; L-valine biosynthesis; L-valine from pyruvate: step 3/4. Functionally, functions in the biosynthesis of branched-chain amino acids. Catalyzes the dehydration of (2R,3R)-2,3-dihydroxy-3-methylpentanoate (2,3-dihydroxy-3-methylvalerate) into 2-oxo-3-methylpentanoate (2-oxo-3-methylvalerate) and of (2R)-2,3-dihydroxy-3-methylbutanoate (2,3-dihydroxyisovalerate) into 2-oxo-3-methylbutanoate (2-oxoisovalerate), the penultimate precursor to L-isoleucine and L-valine, respectively. This Ruthia magnifica subsp. Calyptogena magnifica protein is Dihydroxy-acid dehydratase.